Here is a 180-residue protein sequence, read N- to C-terminus: Adenine phosphoribosyltransferase (180 aa).

At Ser-2 the chain carries N-acetylserine. Phosphoserine is present on residues Ser-15 and Ser-30. Position 60 is a phosphotyrosine (Tyr-60). Ser-66 bears the Phosphoserine mark. N6-acetyllysine is present on Lys-114. The residue at position 135 (Thr-135) is a Phosphothreonine.

It belongs to the purine/pyrimidine phosphoribosyltransferase family. Homodimer.

Its subcellular location is the cytoplasm. It carries out the reaction AMP + diphosphate = 5-phospho-alpha-D-ribose 1-diphosphate + adenine. It participates in purine metabolism; AMP biosynthesis via salvage pathway; AMP from adenine: step 1/1. Functionally, catalyzes a salvage reaction resulting in the formation of AMP, that is energically less costly than de novo synthesis. This Mastomys natalensis (African soft-furred rat) protein is Adenine phosphoribosyltransferase.